The following is a 612-amino-acid chain: Phosphomethylpyrimidine synthase (612 aa).

2 disordered regions span residues 1–33 (MTIK…TEAG) and 105–146 (AGRP…RDGN). Over residues 12 to 24 (TQNTAQADTAENT) the composition is skewed to low complexity. Positions 105–117 (AGRPVRPEDDGIK) are enriched in basic and acidic residues. Substrate contacts are provided by residues N213, M242, Y271, H307, 327–329 (SRG), 368–371 (DGLR), and E407. Zn(2+) is bound at residue H411. Position 434 (Y434) interacts with substrate. H475 serves as a coordination point for Zn(2+). [4Fe-4S] cluster-binding residues include C555, C558, and C563.

It belongs to the ThiC family. Requires [4Fe-4S] cluster as cofactor.

It carries out the reaction 5-amino-1-(5-phospho-beta-D-ribosyl)imidazole + S-adenosyl-L-methionine = 4-amino-2-methyl-5-(phosphooxymethyl)pyrimidine + CO + 5'-deoxyadenosine + formate + L-methionine + 3 H(+). It functions in the pathway cofactor biosynthesis; thiamine diphosphate biosynthesis. Catalyzes the synthesis of the hydroxymethylpyrimidine phosphate (HMP-P) moiety of thiamine from aminoimidazole ribotide (AIR) in a radical S-adenosyl-L-methionine (SAM)-dependent reaction. The chain is Phosphomethylpyrimidine synthase from Streptomyces coelicolor (strain ATCC BAA-471 / A3(2) / M145).